Here is a 348-residue protein sequence, read N- to C-terminus: Phospho-2-dehydro-3-deoxyheptonate aldolase, Trp-sensitive (348 aa).

Belongs to the class-I DAHP synthase family.

The enzyme catalyses D-erythrose 4-phosphate + phosphoenolpyruvate + H2O = 7-phospho-2-dehydro-3-deoxy-D-arabino-heptonate + phosphate. The protein operates within metabolic intermediate biosynthesis; chorismate biosynthesis; chorismate from D-erythrose 4-phosphate and phosphoenolpyruvate: step 1/7. Its function is as follows. Stereospecific condensation of phosphoenolpyruvate (PEP) and D-erythrose-4-phosphate (E4P) giving rise to 3-deoxy-D-arabino-heptulosonate-7-phosphate (DAHP). This Buchnera aphidicola subsp. Acyrthosiphon pisum (strain APS) (Acyrthosiphon pisum symbiotic bacterium) protein is Phospho-2-dehydro-3-deoxyheptonate aldolase, Trp-sensitive (aroH).